The sequence spans 192 residues: Ribosomal RNA small subunit methyltransferase G (192 aa).

S-adenosyl-L-methionine-binding positions include glycine 63, phenylalanine 68, 112–113 (IE), and arginine 125.

This sequence belongs to the methyltransferase superfamily. RNA methyltransferase RsmG family.

Its subcellular location is the cytoplasm. It catalyses the reaction guanosine(527) in 16S rRNA + S-adenosyl-L-methionine = N(7)-methylguanosine(527) in 16S rRNA + S-adenosyl-L-homocysteine. In terms of biological role, specifically methylates the N7 position of guanine in position 527 of 16S rRNA. This Rickettsia felis (strain ATCC VR-1525 / URRWXCal2) (Rickettsia azadi) protein is Ribosomal RNA small subunit methyltransferase G.